The sequence spans 191 residues: NADH-quinone oxidoreductase subunit B 2 (191 aa).

The [4Fe-4S] cluster site is built by C69, C70, C134, and C164.

It belongs to the complex I 20 kDa subunit family. As to quaternary structure, NDH-1 is composed of 14 different subunits. Subunits NuoB, C, D, E, F, and G constitute the peripheral sector of the complex. The cofactor is [4Fe-4S] cluster.

It localises to the cell inner membrane. The enzyme catalyses a quinone + NADH + 5 H(+)(in) = a quinol + NAD(+) + 4 H(+)(out). In terms of biological role, NDH-1 shuttles electrons from NADH, via FMN and iron-sulfur (Fe-S) centers, to quinones in the respiratory chain. Couples the redox reaction to proton translocation (for every two electrons transferred, four hydrogen ions are translocated across the cytoplasmic membrane), and thus conserves the redox energy in a proton gradient. The chain is NADH-quinone oxidoreductase subunit B 2 from Gluconacetobacter diazotrophicus (strain ATCC 49037 / DSM 5601 / CCUG 37298 / CIP 103539 / LMG 7603 / PAl5).